The chain runs to 241 residues: MFITTKKSLIALVLATAGLISSPVSFATETGAQPNLGATLTQLTQQYPIHWISIEQVAESLKGKAPISVGFDIDDTLLFSSPAFFYGKQKFSPDSNAFLKNQKFWDAVSSSGWDRFSIPKDSGRALMELHLKRGDHVYFITGRPMPSNGKEDLTQTLKDDFKIPDNQLNKVIFAGTKQDAKVEYMQKYHITIFYGDSDNDIQDARKAGAEGIRVLRPLNSTNKPMPKNGAFGEKVIVNSQY.

A signal peptide spans 1-27; it reads MFITTKKSLIALVLATAGLISSPVSFA. Aspartate 72 acts as the Nucleophile in catalysis. The Mg(2+) site is built by aspartate 72 and aspartate 74. The active-site Proton donor is the aspartate 74. Substrate is bound by residues 141–142 and lysine 181; that span reads TG. Mg(2+) is bound at residue aspartate 196.

Belongs to the class B bacterial acid phosphatase family. In terms of assembly, homotetramer. Mg(2+) serves as cofactor.

The protein resides in the periplasm. The enzyme catalyses a phosphate monoester + H2O = an alcohol + phosphate. Functionally, dephosphorylates several organic phosphate monoesters. Also has a phosphotransferase activity catalyzing the transfer of low-energy phosphate groups from organic phosphate monoesters to free hydroxyl groups of various organic compounds. The chain is Class B acid phosphatase from Edwardsiella ictaluri (strain 93-146).